The following is a 435-amino-acid chain: Gamma-glutamyl phosphate reductase (435 aa).

This sequence belongs to the gamma-glutamyl phosphate reductase family.

It is found in the cytoplasm. It carries out the reaction L-glutamate 5-semialdehyde + phosphate + NADP(+) = L-glutamyl 5-phosphate + NADPH + H(+). It functions in the pathway amino-acid biosynthesis; L-proline biosynthesis; L-glutamate 5-semialdehyde from L-glutamate: step 2/2. In terms of biological role, catalyzes the NADPH-dependent reduction of L-glutamate 5-phosphate into L-glutamate 5-semialdehyde and phosphate. The product spontaneously undergoes cyclization to form 1-pyrroline-5-carboxylate. In Bradyrhizobium diazoefficiens (strain JCM 10833 / BCRC 13528 / IAM 13628 / NBRC 14792 / USDA 110), this protein is Gamma-glutamyl phosphate reductase.